The following is an 82-amino-acid chain: uncharacterized protein (82 aa).

3 helical membrane-spanning segments follow: residues 4–26 (LDIAFFILPLGIMLLSIVGTCIC), 31–48 (LMPMLSLVISLVLTFTIF), and 52–74 (FLGWAVVYSLVSLALSYITLIVV).

Its subcellular location is the cell membrane. This is an uncharacterized protein from Bacillus subtilis (strain 168).